The primary structure comprises 335 residues: Selenide, water dikinase (335 aa).

U7 is an active-site residue. Position 7 (U7) is a non-standard amino acid, selenocysteine. ATP is bound by residues K10 and 36 to 38 (LGD). Residue D39 participates in Mg(2+) binding. Residues D55, D78, and 126–128 (GHT) contribute to the ATP site. D78 serves as a coordination point for Mg(2+). D232 contributes to the Mg(2+) binding site.

The protein belongs to the selenophosphate synthase 1 family. Class I subfamily. Homodimer. The cofactor is Mg(2+).

The enzyme catalyses hydrogenselenide + ATP + H2O = selenophosphate + AMP + phosphate + 2 H(+). Its function is as follows. Synthesizes selenophosphate from selenide and ATP. The chain is Selenide, water dikinase from Methanococcus maripaludis (strain DSM 14266 / JCM 13030 / NBRC 101832 / S2 / LL).